We begin with the raw amino-acid sequence, 433 residues long: Putative ankyrin repeat protein R578 (433 aa).

ANK repeat units follow at residues 166 to 195 (NKEI…ILSE), 197 to 224 (DHLI…LSKL), 356 to 386 (VNPN…DIHS), and 388 to 415 (PSLI…ICDE).

The protein is Putative ankyrin repeat protein R578 of Acanthamoeba polyphaga mimivirus (APMV).